A 428-amino-acid chain; its full sequence is Histidine--tRNA ligase (428 aa).

Belongs to the class-II aminoacyl-tRNA synthetase family. Homodimer.

The protein localises to the cytoplasm. The catalysed reaction is tRNA(His) + L-histidine + ATP = L-histidyl-tRNA(His) + AMP + diphosphate + H(+). The polypeptide is Histidine--tRNA ligase (Pseudomonas entomophila (strain L48)).